The primary structure comprises 399 residues: Endonuclease III homolog 1 (399 aa).

The N-terminal 26 residues, 1–26 (MQKISKYSSMAILRKRPLVKTETGPE), are a transit peptide targeting the mitochondrion. Positions 14–37 (RKRPLVKTETGPESELLPEKRTKI) match the Bipartite nuclear localization signal motif. Residue K194 forms a Glycyl lysine isopeptide (Lys-Gly) (interchain with G-Cter in SUMO) linkage. Positions 223 to 247 (FSSDVPATINELLGLPGVGPKMAYL) constitute a HhH domain. The active-site Nucleophile; for N-glycosylase activity is K243.

It belongs to the Nth/MutY family. In terms of processing, monosumoylated. Sumoylation is associated with targeting of NTG1 to nuclei containing oxidative DNA damage.

The protein resides in the nucleus. It is found in the mitochondrion. The enzyme catalyses 2'-deoxyribonucleotide-(2'-deoxyribose 5'-phosphate)-2'-deoxyribonucleotide-DNA = a 3'-end 2'-deoxyribonucleotide-(2,3-dehydro-2,3-deoxyribose 5'-phosphate)-DNA + a 5'-end 5'-phospho-2'-deoxyribonucleoside-DNA + H(+). Bifunctional DNA N-glycosylase with associated apurinic/apyrimidinic (AP) lyase function that catalyzes the first step in base excision repair (BER), the primary repair pathway for the repair of oxidative DNA damage. The DNA N-glycosylase activity releases the damaged DNA base from DNA by cleaving the N-glycosidic bond, leaving an AP site. The AP-lyase activity cleaves the phosphodiester bond 3' to the AP site by a beta-elimination. Primarily recognizes and repairs oxidative base damage of pyrimidines, but also purine-derived lesions, alkylation damage and cytosine photoproducts generated by UV irradiation as well as abasic sites. Also has 8-oxoguanine DNA glycosylase activity. The AP lyase can incise AP sites opposite all four bases. May also play a role in the regulation of mtDNA copy number by introducing a double-stranded break (DSB) at the mtDNA replication origin ori5, initiating the rolling-circle mtDNA replication. The protein is Endonuclease III homolog 1 of Saccharomyces cerevisiae (strain ATCC 204508 / S288c) (Baker's yeast).